The primary structure comprises 388 residues: Succinate--CoA ligase [ADP-forming] subunit beta (388 aa).

One can recognise an ATP-grasp domain in the interval 9-244 (KEIFRSMGVA…LEEEDPKEIE (236 aa)). Residues Lys-46, 53-55 (GRG), Glu-99, Cys-102, and Glu-107 each bind ATP. Residues Asn-199 and Asp-213 each contribute to the Mg(2+) site. Residues Asn-264 and 321 to 323 (GIM) contribute to the substrate site.

It belongs to the succinate/malate CoA ligase beta subunit family. Heterotetramer of two alpha and two beta subunits. Mg(2+) is required as a cofactor.

The catalysed reaction is succinate + ATP + CoA = succinyl-CoA + ADP + phosphate. It carries out the reaction GTP + succinate + CoA = succinyl-CoA + GDP + phosphate. It functions in the pathway carbohydrate metabolism; tricarboxylic acid cycle; succinate from succinyl-CoA (ligase route): step 1/1. Functionally, succinyl-CoA synthetase functions in the citric acid cycle (TCA), coupling the hydrolysis of succinyl-CoA to the synthesis of either ATP or GTP and thus represents the only step of substrate-level phosphorylation in the TCA. The beta subunit provides nucleotide specificity of the enzyme and binds the substrate succinate, while the binding sites for coenzyme A and phosphate are found in the alpha subunit. The polypeptide is Succinate--CoA ligase [ADP-forming] subunit beta (Staphylococcus aureus (strain bovine RF122 / ET3-1)).